A 335-amino-acid polypeptide reads, in one-letter code: Nod factor export ATP-binding protein I (335 aa).

Basic and acidic residues predominate over residues 1-10; the sequence is MTQEVPRRLE. The tract at residues 1–22 is disordered; the sequence is MTQEVPRRLEPSPFEWKGDAGP. Residues 37-267 enclose the ABC transporter domain; that stretch reads IDLASVTKSY…KIGCQVIEIY (231 aa). ATP is bound at residue 69-76; that stretch reads GPNGAGKS.

The protein belongs to the ABC transporter superfamily. Lipooligosaccharide exporter (TC 3.A.1.102) family. The complex is composed of two ATP-binding proteins (NodI) and two transmembrane proteins (NodJ).

The protein localises to the cell inner membrane. Functionally, part of the ABC transporter complex NodIJ involved in the export of the nodulation factors (Nod factors), the bacterial signal molecules that induce symbiosis and subsequent nodulation induction. Nod factors are LCO (lipo-chitin oligosaccharide), a modified beta-1,4-linked N-acetylglucosamine oligosaccharide. This subunit is responsible for energy coupling to the transport system. The protein is Nod factor export ATP-binding protein I of Rhizobium meliloti (Ensifer meliloti).